Reading from the N-terminus, the 254-residue chain is 4-hydroxy-tetrahydrodipicolinate reductase (254 aa).

Residue 8–13 (GAFGRM) coordinates NAD(+). Lys36 is an NADP(+) binding site. Residues 89–91 (GTT) and 115–118 (STNY) each bind NAD(+). The Proton donor/acceptor role is filled by His147. His148 lines the (S)-2,3,4,5-tetrahydrodipicolinate pocket. Lys151 (proton donor) is an active-site residue. 157 to 158 (GT) contacts (S)-2,3,4,5-tetrahydrodipicolinate.

The protein belongs to the DapB family.

It localises to the cytoplasm. The catalysed reaction is (S)-2,3,4,5-tetrahydrodipicolinate + NAD(+) + H2O = (2S,4S)-4-hydroxy-2,3,4,5-tetrahydrodipicolinate + NADH + H(+). The enzyme catalyses (S)-2,3,4,5-tetrahydrodipicolinate + NADP(+) + H2O = (2S,4S)-4-hydroxy-2,3,4,5-tetrahydrodipicolinate + NADPH + H(+). It functions in the pathway amino-acid biosynthesis; L-lysine biosynthesis via DAP pathway; (S)-tetrahydrodipicolinate from L-aspartate: step 4/4. Its function is as follows. Catalyzes the conversion of 4-hydroxy-tetrahydrodipicolinate (HTPA) to tetrahydrodipicolinate. The sequence is that of 4-hydroxy-tetrahydrodipicolinate reductase from Methanospirillum hungatei JF-1 (strain ATCC 27890 / DSM 864 / NBRC 100397 / JF-1).